The sequence spans 375 residues: Homoserine O-succinyltransferase (375 aa).

Positions 48-358 (NAVLVCHALS…DAGHDSFLLD (311 aa)) constitute an AB hydrolase-1 domain. The active-site Nucleophile is serine 154. Arginine 224 serves as a coordination point for substrate. Catalysis depends on residues aspartate 319 and histidine 352. A substrate-binding site is contributed by aspartate 353.

The protein belongs to the AB hydrolase superfamily. MetX family. Homodimer.

It localises to the cytoplasm. It catalyses the reaction L-homoserine + succinyl-CoA = O-succinyl-L-homoserine + CoA. It participates in amino-acid biosynthesis; L-methionine biosynthesis via de novo pathway; O-succinyl-L-homoserine from L-homoserine: step 1/1. In terms of biological role, transfers a succinyl group from succinyl-CoA to L-homoserine, forming succinyl-L-homoserine. The protein is Homoserine O-succinyltransferase of Aromatoleum aromaticum (strain DSM 19018 / LMG 30748 / EbN1) (Azoarcus sp. (strain EbN1)).